A 570-amino-acid chain; its full sequence is Periplasmic trehalase (570 aa).

A signal peptide spans 1–34; sequence MITPALRHSGTLSFAIKLTVASTLLTFASLSAHA. Substrate-binding positions include R157, 164-165, N201, 210-212, 282-284, and G315; these read WD, RSQ, and RPE. Catalysis depends on proton donor/acceptor residues D317 and E501. Position 516 (E516) interacts with substrate. A disordered region spans residues 542–570; it reads KPCDSVPATRPAAPGASQPAPQKQVETTP. The segment covering 552-570 has biased composition (low complexity); it reads PAAPGASQPAPQKQVETTP.

This sequence belongs to the glycosyl hydrolase 37 family. Monomer.

The protein localises to the periplasm. The catalysed reaction is alpha,alpha-trehalose + H2O = alpha-D-glucose + beta-D-glucose. In terms of biological role, provides the cells with the ability to utilize trehalose at high osmolarity by splitting it into glucose molecules that can subsequently be taken up by the phosphotransferase-mediated uptake system. The protein is Periplasmic trehalase of Citrobacter koseri (strain ATCC BAA-895 / CDC 4225-83 / SGSC4696).